The following is a 384-amino-acid chain: UDP-galactopyranose mutase (384 aa).

A signal peptide spans methionine 1–alanine 23. Residues serine 14, aspartate 33 to glutamine 34, asparagine 41, and histidine 60 to isoleucine 61 contribute to the FAD site. Asparagine 84, phenylalanine 151, threonine 156, tryptophan 160, and tyrosine 185 together coordinate UDP-alpha-D-galactose. Phenylalanine 219 is an FAD binding site. Asparagine 270, arginine 280, and tyrosine 314 together coordinate UDP-alpha-D-galactose. Arginine 343 contributes to the FAD binding site. A UDP-alpha-D-galactose-binding site is contributed by tyrosine 349. Residue leucine 350–threonine 355 participates in FAD binding.

It belongs to the UDP-galactopyranose/dTDP-fucopyranose mutase family. In terms of assembly, homodimer. The cofactor is FAD.

The enzyme catalyses UDP-alpha-D-galactose = UDP-alpha-D-galactofuranose. It functions in the pathway bacterial outer membrane biogenesis; LPS O-antigen biosynthesis. Involved in the biosynthesis of the galactose-containing O-side-chain polysaccharide backbone structure of D-galactan I which is a key component of lipopolysaccharide (LPS). Catalyzes the interconversion through a 2-keto intermediate of uridine diphosphogalactopyranose (UDP-GalP) into uridine diphosphogalactofuranose (UDP-GalF) which is the biosynthetic precursor of galactofuranosyl residues. The sequence is that of UDP-galactopyranose mutase (rfbD) from Klebsiella pneumoniae.